Reading from the N-terminus, the 78-residue chain is Dihydrofolate reductase type 2 (78 aa).

NADP(+) contacts are provided by residues 32–36 and 66–69; these read KKSGA and VQIY. I68 serves as a coordination point for substrate.

As to quaternary structure, homotetramer.

It carries out the reaction (6S)-5,6,7,8-tetrahydrofolate + NADP(+) = 7,8-dihydrofolate + NADPH + H(+). It participates in cofactor biosynthesis; tetrahydrofolate biosynthesis; 5,6,7,8-tetrahydrofolate from 7,8-dihydrofolate: step 1/1. In terms of biological role, key enzyme in folate metabolism. Catalyzes an essential reaction for de novo glycine and purine synthesis, and for DNA precursor synthesis. This is Dihydrofolate reductase type 2 from Escherichia coli.